The sequence spans 99 residues: MALTKADMTETLYQELGLNKREAKEIVEMFFEDIRCALEQGEAVKLSGFGNFELRDKGERPGRNPKTGEEIPITARRVVTFRPGQKLKARVEAYAGGKQ.

This sequence belongs to the bacterial histone-like protein family. In terms of assembly, heterodimer of an alpha and a beta chain.

This protein is one of the two subunits of integration host factor, a specific DNA-binding protein that functions in genetic recombination as well as in transcriptional and translational control. The polypeptide is Integration host factor subunit alpha (Nitrosococcus oceani (strain ATCC 19707 / BCRC 17464 / JCM 30415 / NCIMB 11848 / C-107)).